Here is a 116-residue protein sequence, read N- to C-terminus: Prefoldin subunit beta (116 aa).

Belongs to the prefoldin subunit beta family. In terms of assembly, heterohexamer of two alpha and four beta subunits.

Its subcellular location is the cytoplasm. In terms of biological role, molecular chaperone capable of stabilizing a range of proteins. Seems to fulfill an ATP-independent, HSP70-like function in archaeal de novo protein folding. The sequence is that of Prefoldin subunit beta from Methanobrevibacter smithii (strain ATCC 35061 / DSM 861 / OCM 144 / PS).